Here is a 1096-residue protein sequence, read N- to C-terminus: MSRSAIQVAKTATHLPDLVEVQRASFKWFLEKGLIEELENFSPITDYTGKLELHFIGSEYRLKRPRHDVEEAKKRDATFASQMYVTCRLINKETGEIKEQEVFIGELPLMTERGTFIINGAERVIVNQIVRSPGVYFKDEQDKNGRRTYNASVIPNRGAWLKFETDKNDLLHVRVDKTRKINAHVLMRAMGLSDNDVIDKLRHPEYYKKSIEAADEEGISSEDQALLELYKKLRPGEPPSVSGGQQLLQSRFFDPKRYDLGRVGRYKINKKLRLTIPDSVRTLTHEDVLSTIDYLINLELDVGGATLDDIDHLGNRRVRSVGELLQNQVRVGLNRLERIIKERMTVGETDSLTPAQLVNPKPLVAAVKEFFGSSQLSQFMDQTNPLAELTHKRRISALGPGGLTRERAGFAVRDIHPSHYGRLCPIETPEGPNAGLINSLATHARVNDYGFIETPFWKVDKGRVIKEGKPIYLSADLEDECRVAPGDVATDKEGMIVADLIPVRYRQDFEKVPPEQVDYVQLSPVQVISVATSLIPFLEHDDANRALMGSNMQRQAVPLLRPERPLVGTGLETQVARDSGMVPISQVNGTVTYVDANIIVVTDEEGSEHHHSLQKYQRSNQDTCLNQRPIVHNGDPVIIGQVLADGSACEGGEIALGQNVLIAYMPWEGYNYEDAILVSERLVKDDLYTSVHIEKYEIEARQTKLGPEEITREIPNIAEESLGNLDEMGIIRIGAFVESGDILVGKVTPKGESDQPPEEKLLRAIFGEKARDVRDNSLRVPSTERGRVVDVRIYTREQGDELPPGANMVVRVYVAQRRKIQVGDKMAGRHGNKGIISRILPREDMPYLPDGTPVDIVLNPLGVPSRMNVGQVFELLMGWAASNLDCRVKVVPFDEMYGAEKSYQTVTAYLKEAASLPGKEWVYNPEDPGKLLLRDGRTGEPFDQPVAVGYSHFLKLVHLVDDKIHARSTGPYSLVTQQPLGGKAQQGGQRLGEMEVWALEAYGAAYTLQELLTVKSDDMQGRNEALNAIVKGKPIPRPGTPESFKVLMRELQSLGLDIGVYTDEGKEVDLMQDVNPRRSTPSRPTYESLGSDYQED.

Positions 1070–1096 (LMQDVNPRRSTPSRPTYESLGSDYQED) are disordered.

The protein belongs to the RNA polymerase beta chain family. In terms of assembly, in cyanobacteria the RNAP catalytic core is composed of 2 alpha, 1 beta, 1 beta', 1 gamma and 1 omega subunit. When a sigma factor is associated with the core the holoenzyme is formed, which can initiate transcription.

It carries out the reaction RNA(n) + a ribonucleoside 5'-triphosphate = RNA(n+1) + diphosphate. In terms of biological role, DNA-dependent RNA polymerase catalyzes the transcription of DNA into RNA using the four ribonucleoside triphosphates as substrates. This is DNA-directed RNA polymerase subunit beta from Prochlorococcus marinus (strain MIT 9211).